The following is a 579-amino-acid chain: CTP synthase (579 aa).

The tract at residues 1 to 281 (MPALRKHPQT…DAYVVRRLNL (281 aa)) is amidoligase domain. Residue Ser-23 participates in CTP binding. A UTP-binding site is contributed by Ser-23. ATP contacts are provided by residues 24-29 (SLGKGL) and Asp-81. Positions 81 and 155 each coordinate Mg(2+). Residues 162–164 (DIE), 202–207 (KTKPTQ), and Lys-238 each bind CTP. UTP-binding positions include 202-207 (KTKPTQ) and Lys-238. The region spanning 306-554 (RIALVGKYID…IGAALDYKAA (249 aa)) is the Glutamine amidotransferase type-1 domain. Gly-369 is an L-glutamine binding site. Cys-396 functions as the Nucleophile; for glutamine hydrolysis in the catalytic mechanism. Residues 397 to 400 (LGLQ), Glu-419, and Arg-480 contribute to the L-glutamine site. Active-site residues include His-527 and Glu-529.

This sequence belongs to the CTP synthase family. Homotetramer.

It carries out the reaction UTP + L-glutamine + ATP + H2O = CTP + L-glutamate + ADP + phosphate + 2 H(+). The catalysed reaction is L-glutamine + H2O = L-glutamate + NH4(+). It catalyses the reaction UTP + NH4(+) + ATP = CTP + ADP + phosphate + 2 H(+). The protein operates within pyrimidine metabolism; CTP biosynthesis via de novo pathway; CTP from UDP: step 2/2. With respect to regulation, allosterically activated by GTP, when glutamine is the substrate; GTP has no effect on the reaction when ammonia is the substrate. The allosteric effector GTP functions by stabilizing the protein conformation that binds the tetrahedral intermediate(s) formed during glutamine hydrolysis. Inhibited by the product CTP, via allosteric rather than competitive inhibition. Functionally, catalyzes the ATP-dependent amination of UTP to CTP with either L-glutamine or ammonia as the source of nitrogen. Regulates intracellular CTP levels through interactions with the four ribonucleotide triphosphates. The chain is CTP synthase from Mycobacterium sp. (strain KMS).